Reading from the N-terminus, the 706-residue chain is Protein-glutamine gamma-glutamyltransferase 6 (706 aa).

Residues alanine 223, asparagine 226, and asparagine 228 each coordinate Ca(2+). The active site involves cysteine 274. Residues aspartate 303, aspartate 305, asparagine 307, serine 309, and aspartate 327 each coordinate Ca(2+). Residues histidine 333 and aspartate 356 contribute to the active site. 4 residues coordinate Ca(2+): asparagine 396, threonine 417, glutamate 445, and glutamate 450.

The protein belongs to the transglutaminase superfamily. Transglutaminase family. The cofactor is Ca(2+).

Its subcellular location is the cytoplasm. It carries out the reaction L-glutaminyl-[protein] + L-lysyl-[protein] = [protein]-L-lysyl-N(6)-5-L-glutamyl-[protein] + NH4(+). Catalyzes the cross-linking of proteins and the conjugation of polyamines to proteins. The protein is Protein-glutamine gamma-glutamyltransferase 6 (TGM6) of Homo sapiens (Human).